We begin with the raw amino-acid sequence, 130 residues long: Large ribosomal subunit protein bL20c (130 aa).

It belongs to the bacterial ribosomal protein bL20 family.

It is found in the plastid. The protein localises to the chloroplast. Its function is as follows. Binds directly to 23S ribosomal RNA and is necessary for the in vitro assembly process of the 50S ribosomal subunit. It is not involved in the protein synthesizing functions of that subunit. This Glycine max (Soybean) protein is Large ribosomal subunit protein bL20c (rpl20).